The sequence spans 576 residues: Mycobactin import ATP-binding/permease protein IrtB (576 aa).

Topologically, residues 1–25 (MIRTLIALVPADKRGTLGLYTVLTV) are cytoplasmic. The ABC transmembrane type-1 domain maps to 19 to 299 (LYTVLTVLSV…LSELTPAIES (281 aa)). The chain crosses the membrane as a helical span at residues 26–46 (LSVVIRAAGTVLLVPLVAALF). Residues 47–52 (GDTPQD) lie on the Periplasmic side of the membrane. A helical transmembrane segment spans residues 53–73 (AWPWLGWLTAATAAGWIVDTT). The Cytoplasmic portion of the chain corresponds to 74–131 (TSRLGFDLGFAVLDHTQHDVADRMPNIRLDWLTAENTATARAAIASTGPELVGLVVNL). A run of 2 helical transmembrane segments spans residues 132–152 (LTPLIGAVLLPAAIAVALVAV) and 153–173 (SPPLGLAALAGVVVLLGAMWA). The Cytoplasmic portion of the chain corresponds to 174–241 (SNRLSRKADT…RLLAMQIPGQ (68 aa)). Residues 242-262 (LLFSLASQLALILLAGMATWL) traverse the membrane as a helical segment. At 263-267 (TVRGE) the chain is on the periplasmic side. Residues 268–288 (LSVPEAVAMIVVVARYLEPFT) form a helical membrane-spanning segment. At 289–576 (SLSELTPAIE…HEAADWQITH (288 aa)) the chain is on the cytoplasmic side. The ABC transporter domain maps to 332 to 565 (IEFDCVTFGY…GGRFDEFWRR (234 aa)). 364–371 (GPSGSGKS) contributes to the ATP binding site.

Belongs to the ABC transporter superfamily. Siderophore-Fe(3+) uptake transporter (SIUT) (TC 3.A.1.21) family. Forms a heterodimer with IrtA.

It is found in the cell inner membrane. Its function is as follows. Part of the ABC transporter complex IrtAB involved in the import of iron-bound mycobactin (Fe-MBT) and carboxymycobactin (Fe-cMBT). Has a preference for Fe-MBT over Fe-cMBT. Transmembrane domains (TMD) form a pore in the membrane and the ATP-binding domain (NBD) is responsible for energy generation. This is Mycobactin import ATP-binding/permease protein IrtB from Mycolicibacterium smegmatis (strain ATCC 700084 / mc(2)155) (Mycobacterium smegmatis).